Here is a 363-residue protein sequence, read N- to C-terminus: 5-formaminoimidazole-4-carboxamide-1-(beta)-D-ribofuranosyl 5'-monophosphate synthetase (363 aa).

Positions 29 and 96 each coordinate 5-amino-1-(5-phospho-beta-D-ribosyl)imidazole-4-carboxamide. An ATP-grasp domain is found at Arg-118 to Glu-354. Residues Pro-148–Cys-210 and Glu-232 each bind ATP. 5-amino-1-(5-phospho-beta-D-ribosyl)imidazole-4-carboxamide is bound at residue Asn-260. Positions 299 and 312 each coordinate Mg(2+).

The protein belongs to the phosphohexose mutase family. The cofactor is Mg(2+). Mn(2+) is required as a cofactor.

The enzyme catalyses 5-amino-1-(5-phospho-beta-D-ribosyl)imidazole-4-carboxamide + formate + ATP = 5-formamido-1-(5-phospho-D-ribosyl)imidazole-4-carboxamide + ADP + phosphate. It participates in purine metabolism; IMP biosynthesis via de novo pathway; 5-formamido-1-(5-phospho-D-ribosyl)imidazole-4-carboxamide from 5-amino-1-(5-phospho-D-ribosyl)imidazole-4-carboxamide (formate route): step 1/1. Functionally, catalyzes the ATP- and formate-dependent formylation of 5-aminoimidazole-4-carboxamide-1-beta-d-ribofuranosyl 5'-monophosphate (AICAR) to 5-formaminoimidazole-4-carboxamide-1-beta-d-ribofuranosyl 5'-monophosphate (FAICAR) in the absence of folates. The chain is 5-formaminoimidazole-4-carboxamide-1-(beta)-D-ribofuranosyl 5'-monophosphate synthetase from Methanosphaera stadtmanae (strain ATCC 43021 / DSM 3091 / JCM 11832 / MCB-3).